A 361-amino-acid chain; its full sequence is Phosphoserine aminotransferase (361 aa).

Arg-42 provides a ligand contact to L-glutamate. Pyridoxal 5'-phosphate is bound by residues 76 to 77 (AR), Trp-102, Thr-153, Asp-173, and Gln-196. The residue at position 197 (Lys-197) is an N6-(pyridoxal phosphate)lysine. 238–239 (NT) contacts pyridoxal 5'-phosphate.

The protein belongs to the class-V pyridoxal-phosphate-dependent aminotransferase family. SerC subfamily. As to quaternary structure, homodimer. Requires pyridoxal 5'-phosphate as cofactor.

It localises to the cytoplasm. It catalyses the reaction O-phospho-L-serine + 2-oxoglutarate = 3-phosphooxypyruvate + L-glutamate. It carries out the reaction 4-(phosphooxy)-L-threonine + 2-oxoglutarate = (R)-3-hydroxy-2-oxo-4-phosphooxybutanoate + L-glutamate. It participates in amino-acid biosynthesis; L-serine biosynthesis; L-serine from 3-phospho-D-glycerate: step 2/3. The protein operates within cofactor biosynthesis; pyridoxine 5'-phosphate biosynthesis; pyridoxine 5'-phosphate from D-erythrose 4-phosphate: step 3/5. Catalyzes the reversible conversion of 3-phosphohydroxypyruvate to phosphoserine and of 3-hydroxy-2-oxo-4-phosphonooxybutanoate to phosphohydroxythreonine. This chain is Phosphoserine aminotransferase, found in Yersinia pestis (strain Pestoides F).